Reading from the N-terminus, the 271-residue chain is Mannosyl-3-phosphoglycerate phosphatase (271 aa).

Asp-13 (nucleophile) is an active-site residue. Mg(2+) is bound by residues Asp-13, Asp-15, and Asp-214.

Belongs to the HAD-like hydrolase superfamily. MPGP family. Requires Mg(2+) as cofactor.

It is found in the cytoplasm. The catalysed reaction is 2-O-(alpha-D-mannosyl)-3-phosphoglycerate + H2O = (2R)-2-O-(alpha-D-mannosyl)-glycerate + phosphate. This chain is Mannosyl-3-phosphoglycerate phosphatase, found in Escherichia coli (strain SMS-3-5 / SECEC).